A 267-amino-acid polypeptide reads, in one-letter code: Thiazole synthase (267 aa).

Lysine 110 serves as the catalytic Schiff-base intermediate with DXP. 1-deoxy-D-xylulose 5-phosphate is bound by residues glycine 171, 197 to 198 (AG), and 219 to 220 (NT).

This sequence belongs to the ThiG family. As to quaternary structure, homotetramer. Forms heterodimers with either ThiH or ThiS.

The protein localises to the cytoplasm. The catalysed reaction is [ThiS sulfur-carrier protein]-C-terminal-Gly-aminoethanethioate + 2-iminoacetate + 1-deoxy-D-xylulose 5-phosphate = [ThiS sulfur-carrier protein]-C-terminal Gly-Gly + 2-[(2R,5Z)-2-carboxy-4-methylthiazol-5(2H)-ylidene]ethyl phosphate + 2 H2O + H(+). It participates in cofactor biosynthesis; thiamine diphosphate biosynthesis. Its function is as follows. Catalyzes the rearrangement of 1-deoxy-D-xylulose 5-phosphate (DXP) to produce the thiazole phosphate moiety of thiamine. Sulfur is provided by the thiocarboxylate moiety of the carrier protein ThiS. In vitro, sulfur can be provided by H(2)S. In Maricaulis maris (strain MCS10) (Caulobacter maris), this protein is Thiazole synthase.